The sequence spans 556 residues: Membrane protein insertase YidC (556 aa).

Residues 7–27 (ILLVALAVVAYLMVLQWNQDY) traverse the membrane as a helical segment. Disordered stretches follow at residues 35-59 (ETAQSQPAAPALPDSPSATTEGNAN) and 126-152 (SSERTYEAQSGLIGDGPDKASGRPQYS). Residues 36 to 54 (TAQSQPAAPALPDSPSATT) are compositionally biased toward low complexity. The next 4 membrane-spanning stretches (helical) occupy residues 365-385 (LLGNWGWSIIVLTIVIKLAFF), 435-455 (LGGCLPILVQMPVFLALYWVL), 468-488 (FWITDLSIKDPYFILPIIMGV), and 513-533 (PIIFTFFFLWFPAGLVLYWVV).

This sequence belongs to the OXA1/ALB3/YidC family. Type 1 subfamily. In terms of assembly, interacts with the Sec translocase complex via SecD. Specifically interacts with transmembrane segments of nascent integral membrane proteins during membrane integration.

Its subcellular location is the cell inner membrane. In terms of biological role, required for the insertion and/or proper folding and/or complex formation of integral membrane proteins into the membrane. Involved in integration of membrane proteins that insert both dependently and independently of the Sec translocase complex, as well as at least some lipoproteins. Aids folding of multispanning membrane proteins. The protein is Membrane protein insertase YidC of Stutzerimonas stutzeri (strain A1501) (Pseudomonas stutzeri).